The sequence spans 396 residues: Elongation factor Tu (396 aa).

Residues 10 to 206 enclose the tr-type G domain; that stretch reads KPHCNIGTIG…AVDEFIPQPT (197 aa). The segment at 19 to 26 is G1; that stretch reads GHVDHGKT. 19–26 is a GTP binding site; it reads GHVDHGKT. Mg(2+) is bound at residue threonine 26. The segment at 60-64 is G2; that stretch reads GITIS. Residues 81–84 form a G3 region; that stretch reads DCPG. GTP contacts are provided by residues 81-85 and 136-139; these read DCPGH and NKVD. The G4 stretch occupies residues 136–139; the sequence is NKVD. The tract at residues 174–176 is G5; that stretch reads SAL.

This sequence belongs to the TRAFAC class translation factor GTPase superfamily. Classic translation factor GTPase family. EF-Tu/EF-1A subfamily. As to quaternary structure, monomer.

The protein localises to the cytoplasm. The enzyme catalyses GTP + H2O = GDP + phosphate + H(+). In terms of biological role, GTP hydrolase that promotes the GTP-dependent binding of aminoacyl-tRNA to the A-site of ribosomes during protein biosynthesis. The protein is Elongation factor Tu of Pelagibacter ubique (strain HTCC1062).